The sequence spans 448 residues: MPGIKRILTVTILALCLPSPGNAQAQCTNGFDLDRQSGQCLDIDECRTIPEACRGDMMCVNQNGRYLCIPRTNPVYRGPYSNPYSTPYSGPYPAAAPPLSAPNYPTISRPLICRFGYQMDESNQCVDVDECATDSHQCNPTQICINTEGGYTCSCTDGYWLLEGQCLDIDECRYGYCQQLCANVPGSYSCTCNPGFTLNEDGRSCQDVNECATENPCVQTCVNTYGSFICRCDPGYELEEDGVHCSDMDECSFSEFLCQHECVNQPGTYFCSCPPGYILLDDNRSCQDINECEHRNHTCNLQQTCYNLQGGFKCIDPIRCEEPYLRISDNRCMCPAENPGCRDQPFTILYRDMDVVSGRSVPADIFQMQATTRYPGAYYIFQIKSGNEGREFYMRQTGPISATLVMTRPIKGPREIQLDLEMITVNTVINFRGSSVIRLRIYVSQYPF.

A signal peptide spans 1-23 (MPGIKRILTVTILALCLPSPGNA). The region spanning 42–82 (DIDECRTIPEACRGDMMCVNQNGRYLCIPRTNPVYRGPYSN) is the EGF-like 1; calcium-binding domain. 17 disulfides stabilise this stretch: cysteine 46/cysteine 59, cysteine 53/cysteine 68, cysteine 131/cysteine 144, cysteine 138/cysteine 153, cysteine 155/cysteine 166, cysteine 172/cysteine 181, cysteine 177/cysteine 190, cysteine 192/cysteine 205, cysteine 211/cysteine 221, cysteine 217/cysteine 230, cysteine 232/cysteine 245, cysteine 251/cysteine 262, cysteine 258/cysteine 271, cysteine 273/cysteine 286, cysteine 292/cysteine 305, cysteine 299/cysteine 314, and cysteine 320/cysteine 332. Positions 54-56 (RGD) match the Cell attachment site motif. In terms of domain architecture, EGF-like 2; calcium-binding spans 127–167 (DVDECATDSHQCNPTQICINTEGGYTCSCTDGYWLLEGQCL). One can recognise an EGF-like 3; calcium-binding domain in the interval 168 to 206 (DIDECRYGYCQQLCANVPGSYSCTCNPGFTLNEDGRSCQ). The region spanning 207-246 (DVNECATENPCVQTCVNTYGSFICRCDPGYELEEDGVHCS) is the EGF-like 4; calcium-binding domain. The tract at residues 245–448 (CSDMDECSFS…LRIYVSQYPF (204 aa)) is interaction with LOXL1. The EGF-like 5; calcium-binding domain occupies 247–287 (DMDECSFSEFLCQHECVNQPGTYFCSCPPGYILLDDNRSCQ). N-linked (GlcNAc...) asparagine glycans are attached at residues asparagine 283 and asparagine 296. The 46-residue stretch at 288 to 333 (DINECEHRNHTCNLQQTCYNLQGGFKCIDPIRCEEPYLRISDNRCM) folds into the EGF-like 6; calcium-binding domain.

Belongs to the fibulin family. As to quaternary structure, homodimer. Monomer, homodimerizes in presence of Ca(2+). Interacts with ELN. Interacts (via N-terminus) with the integrins ITGAV/ITGB3, ITGAV/ITGB5 and ITGA9/ITGB1. Interacts with FBN1 (via N-terminal domain). Forms a ternary complex with ELN and FBN1. Interacts with EFEMP2 with moderate affinity. Interacts with LOXL1. Post-translationally, N-glycosylated.

It localises to the secreted. The protein localises to the extracellular space. It is found in the extracellular matrix. Functionally, essential for elastic fiber formation, is involved in the assembly of continuous elastin (ELN) polymer and promotes the interaction of microfibrils and ELN. Stabilizes and organizes elastic fibers in the skin, lung and vasculature. Promotes adhesion of endothelial cells through interaction of integrins and the RGD motif. Vascular ligand for integrin receptors which may play a role in vascular development and remodeling. May act as an adapter that mediates the interaction between FBN1 and ELN. The protein is Fibulin-5 (FBLN5) of Pongo abelii (Sumatran orangutan).